A 614-amino-acid polypeptide reads, in one-letter code: Vitamin B12 transporter BtuB (614 aa).

The first 20 residues, 1 to 20 (MIKKASLLTACSVTAFSAWA), serve as a signal peptide directing secretion. The TonB box motif lies at 26–33 (DTLVVTAN). Residues 38 to 152 (PRSTVLAPTT…IGGVVNIITT (115 aa)) enclose the TBDR plug domain. Cyanocob(III)alamin-binding positions include L83, S85, N92, and 110–111 (VS). In terms of domain architecture, TBDR beta-barrel spans 155-614 (EPGTEISAGW…EYTLSGSYTF (460 aa)). 3 beta stranded membrane passes run 158–165 (TEISAGWG), 169–178 (YQNYDVSTQQ), and 184–195 (TRVTLLGDYAHT). Residues D199, Q211, D213, and D215 each contribute to the Ca(2+) site. Beta stranded transmembrane passes span 217-227 (FLSKTLYGALE) and 232-248 (DAWS…NRTN). Residues Y249 and D250 each contribute to the Ca(2+) site. A251 contacts cyanocob(III)alamin. A Ca(2+)-binding site is contributed by D261. The next 14 beta stranded transmembrane spans lie at 263–277 (RKLY…LRYN), 279–296 (ELIK…KDYN), 309–325 (TLDE…NNII), 328–337 (HGNVGAGVDW), 353–369 (YDQR…QQVG), 371–381 (FTFEGAARSDD), 385–400 (FGRH…WEFI), 403–417 (YRFI…KAPN), 434–443 (KSKQWEGAFE), 449–458 (VNWRISGYRN), 473–490 (YYNE…TANF), 494–509 (PLTH…ARNA), 517–529 (RRAK…QLDW), and 535–550 (DWGI…YDKD). Residue T309 participates in cyanocob(III)alamin binding. R517 is a cyanocob(III)alamin binding site. Y551 contacts cyanocob(III)alamin. The next 3 membrane-spanning stretches (beta stranded) occupy residues 558–572 (TVKM…LAVA), 585–596 (IANLFDKDYETV), and 602–614 (AGRE…SYTF). The short motif at 597 to 614 (YGYQTAGREYTLSGSYTF) is the TonB C-terminal box element.

Belongs to the TonB-dependent receptor family. BtuB (TC 1.B.14.3.1) subfamily.

Its subcellular location is the cell outer membrane. In terms of biological role, involved in the active translocation of vitamin B12 (cyanocobalamin) across the outer membrane to the periplasmic space. It derives its energy for transport by interacting with the trans-periplasmic membrane protein TonB. This is Vitamin B12 transporter BtuB from Shigella dysenteriae serotype 1 (strain Sd197).